Reading from the N-terminus, the 138-residue chain is Phospholipase A2 homolog crotoxin acid subunit CA (138 aa).

The N-terminal stretch at 1–37 (MRALWIVAVLLVGVEGSLVEFETLMMKIAGRSGISYY) is a signal peptide. 8 cysteine pairs are disulfide-bonded: Cys42-Cys131, Cys44-Cys60, Cys59-Cys111, Cys65-Cys138, Cys66-Cys104, Cys73-Cys97, Cys91-Cys102, and Cys131-Cys138. Positions 79–82 (VYTY) are excised as a propeptide. Gln84 is modified (pyrrolidone carboxylic acid). The propeptide occupies 119–124 (YDYKYL). Gln125 carries the post-translational modification Pyrrolidone carboxylic acid.

The protein belongs to the phospholipase A2 family. Group II subfamily. D49 sub-subfamily. In terms of assembly, heterodimer of one of the acidic (CA1, CA2, CA3 or CA4) and one of the basic (CBa1, CBa2, CBb, CBc or CBd) subunits; non-covalently linked. The acidic subunit is non-toxic, without enzymatic activity and comprises 3 peptides that are cross-linked by 5 disulfide bridges. The basic subunit is toxic, has phospholipase A2 activity and is composed of a single chain. Multiple variants of each subunit give different crotoxin complexes that can be subdivided into 2 classes: (1) those of high toxicity, low PLA2 activity (CBb, CBc and CBd linked with high affinity to any CA) and high stability (K(d)=4.5 nM) and (2) those of moderate toxicity, high PLA2 activity (CBa2 linked with low affinity to any CA) and low stability (K(d)=25 nM). In terms of tissue distribution, expressed by the venom gland.

The protein localises to the secreted. Functionally, CAalpha-CAbeta-CAgamma: The acidic subunit of crotoxin (CA) is a heterotrimer of three disulfide-linked chains generated by post-translational maturation of a PLA2-like precursor. CA has no PLA2 activity and is not neurotoxic by itself, but plays several important functions in the crotoxin complex by increasing the lethal potency of the uncomplexed CB subunit. It acts by physically occluding the hydrophobic interfacial binding surface (IBS) of CB. This effect decreases the adsorption of CB to phospholipid membranes, targeting the crotoxin complex to reach the specific presynaptic receptor (R48) at the neuromuscular junction. It also prevents the formation of the reactive CB dimer. Moreover, the CA subunit inhibits the catalytic activity by partially masking the catalytic site of CB and inhibits its anticoagulant activity. In terms of biological role, heterodimer CA-CB: Crotoxin is a potent presynaptic neurotoxin that possesses phospholipase A2 (PLA2) activity and exerts a lethal action by blocking neuromuscular transmission. It consists of a non-covalent association of a basic and weakly toxic PLA2 subunit (CBa2, CBb, CBc, or CBd), with a small acidic, non-enzymatic and non-toxic subunit (CA1, CA2, CA3 or CA4). The complex acts by binding to a specific 48-kDa protein (R48/CAPT) receptor located on presynaptic membranes, forming a transient ternary complex CA-CB-R48, followed by dissociation of the CA-CB complex and release of the CA subunit. At equilibrium, only the CB subunits remain associated with the specific crotoxin receptor. In addition to neurotoxicity, crotoxin has been found to exert myotoxicity, nephrotoxicity, and cardiovascular toxicity. Moreover, anti-inflammatory, immunomodulatory, anti-tumor and analgesic effects of crotoxin have also been reported. Its function is as follows. Found in the venom as a monomer and stabilized by one disulfide bond (Cys-131 and Cys-138). This peptide induces potent antinociceptive effects in acute and chronic pain models. This effect is mediated by the release of peripheral dynorphin A, an endogenous agonist of kappa-opioid receptors, and this release is dependent on cannabinoid receptor CB2 activation. The sequence is that of Phospholipase A2 homolog crotoxin acid subunit CA from Crotalus durissus terrificus (South American rattlesnake).